Consider the following 116-residue polypeptide: Tyrosine-protein phosphatase 14 (116 aa).

In terms of domain architecture, Tyrosine-protein phosphatase spans 1 to 116 (WRMITQEKAQ…SLKNPGPVIV (116 aa)). Residue Asp84 coordinates substrate.

Belongs to the protein-tyrosine phosphatase family.

The catalysed reaction is O-phospho-L-tyrosyl-[protein] + H2O = L-tyrosyl-[protein] + phosphate. This is Tyrosine-protein phosphatase 14 (STY-14) from Styela plicata (Wrinkled sea squirt).